A 440-amino-acid chain; its full sequence is Glutamate-1-semialdehyde 2,1-aminomutase (440 aa).

Residue Lys-271 is modified to N6-(pyridoxal phosphate)lysine.

It belongs to the class-III pyridoxal-phosphate-dependent aminotransferase family. HemL subfamily. Homodimer. Pyridoxal 5'-phosphate is required as a cofactor.

It localises to the cytoplasm. The enzyme catalyses (S)-4-amino-5-oxopentanoate = 5-aminolevulinate. It functions in the pathway porphyrin-containing compound metabolism; protoporphyrin-IX biosynthesis; 5-aminolevulinate from L-glutamyl-tRNA(Glu): step 2/2. This is Glutamate-1-semialdehyde 2,1-aminomutase from Chlamydia pneumoniae (Chlamydophila pneumoniae).